Reading from the N-terminus, the 1073-residue chain is Probable inorganic carbon transporter subunit DabA (1073 aa).

Positions 551, 553, 742, and 757 each coordinate Zn(2+).

This sequence belongs to the inorganic carbon transporter (TC 9.A.2) DabA family. Forms a complex with DabB. It depends on Zn(2+) as a cofactor.

It is found in the cell inner membrane. Its function is as follows. Part of an energy-coupled inorganic carbon pump. This Methylococcus capsulatus (strain ATCC 33009 / NCIMB 11132 / Bath) protein is Probable inorganic carbon transporter subunit DabA.